The following is a 513-amino-acid chain: Alanine--glyoxylate aminotransferase 2, mitochondrial (513 aa).

A mitochondrion-targeting transit peptide spans 1-40; sequence MSLAWRNLQKPFYLETSLRILQMRPSLSLGASRIAVPKLT. Lys56 is subject to N6-acetyllysine. An N6-acetyllysine; alternate modification is found at Lys70. An N6-succinyllysine; alternate modification is found at Lys70. Lys83 carries the N6-acetyllysine modification. N6-acetyllysine; alternate is present on Lys261. N6-succinyllysine; alternate is present on Lys261. Residue Lys303 is modified to N6-succinyllysine. An N6-(pyridoxal phosphate)lysine modification is found at Lys349. 2 positions are modified to N6-acetyllysine; alternate: Lys416 and Lys419. N6-succinyllysine; alternate occurs at positions 416 and 419. Lys453 is modified (N6-acetyllysine).

Belongs to the class-III pyridoxal-phosphate-dependent aminotransferase family. Homotetramer. The cofactor is pyridoxal 5'-phosphate. Expressed in the liver and kidney.

It is found in the mitochondrion. It carries out the reaction glyoxylate + L-alanine = glycine + pyruvate. It catalyses the reaction (R)-3-amino-2-methylpropanoate + pyruvate = 2-methyl-3-oxopropanoate + L-alanine. The enzyme catalyses 3-oxopropanoate + L-alanine = beta-alanine + pyruvate. The catalysed reaction is 2-oxobutanoate + L-alanine = (2S)-2-aminobutanoate + pyruvate. It carries out the reaction N(omega),N(omega)-dimethyl-L-arginine + pyruvate = 5-(3,3-dimethylguanidino)-2-oxopentanoate + L-alanine. It catalyses the reaction N(omega),N('omega)-dimethyl-L-arginine + pyruvate = 5-(3,3'-dimethylguanidino)-2-oxopentanoate + L-alanine. The enzyme catalyses N(omega),N(omega)-dimethyl-L-arginine + glyoxylate = 5-(3,3-dimethylguanidino)-2-oxopentanoate + glycine. The catalysed reaction is N(omega),N('omega)-dimethyl-L-arginine + glyoxylate = 5-(3,3'-dimethylguanidino)-2-oxopentanoate + glycine. It carries out the reaction N(omega)-methyl-L-arginine + pyruvate = 5-(3-methylguanidino)-2-oxopentanoate + L-alanine. It catalyses the reaction N(omega)-methyl-L-arginine + glyoxylate = 5-(3-methylguanidino)-2-oxopentanoate + glycine. The enzyme catalyses L-ornithine + pyruvate = 5-amino-2-oxopentanoate + L-alanine. The catalysed reaction is L-ornithine + glyoxylate = 5-amino-2-oxopentanoate + glycine. It carries out the reaction (2S)-2-aminobutanoate + glyoxylate = 2-oxobutanoate + glycine. It catalyses the reaction N(omega),N(omega)-dimethyl-L-arginine + oxaloacetate = 5-(3,3-dimethylguanidino)-2-oxopentanoate + L-aspartate. The enzyme catalyses oxaloacetate + L-alanine = L-aspartate + pyruvate. The catalysed reaction is N(omega),N(omega)-dimethyl-L-arginine + 2-oxobutanoate = 5-(3,3-dimethylguanidino)-2-oxopentanoate + (2S)-2-aminobutanoate. It carries out the reaction 2-oxopentanoate + N(omega),N(omega)-dimethyl-L-arginine = 5-(3,3-dimethylguanidino)-2-oxopentanoate + L-2-aminopentanoate. It catalyses the reaction 2-oxohexanoate + N(omega),N(omega)-dimethyl-L-arginine = L-2-aminohexanoate + 5-(3,3-dimethylguanidino)-2-oxopentanoate. With respect to regulation, (R)-3-amino-2-methylpropionate--pyruvate transaminase and beta-alanine-pyruvate aminotransferase are inhibited by aminooxyacetic acid. In terms of biological role, multifunctional aminotransferase with a broad substrate specificity. Catalyzes the conversion of glyoxylate to glycine using alanine as the amino donor. Catalyzes metabolism of not L- but the D-isomer of D-beta-aminoisobutyric acid to generate 2-methyl-3-oxopropanoate and alanine. Catalyzes the transfer of the amino group from beta-alanine to pyruvate to yield L-alanine and 3-oxopropanoate. Can metabolize NG-monomethyl-L-arginine (NMMA), asymmetric NG,NG-dimethyl-L-arginine (ADMA) and symmetric NG,N'G-dimethyl-L-arginine (SDMA). ADMA is a potent inhibitor of nitric-oxide (NO) synthase, and this activity provides mechanism through which the kidney regulates blood pressure. This is Alanine--glyoxylate aminotransferase 2, mitochondrial (Agxt2) from Mus musculus (Mouse).